Reading from the N-terminus, the 380-residue chain is Chaperone protein DnaJ (380 aa).

One can recognise a J domain in the interval 5–72 (DYYETLGVAK…QKRAAYDQYG (68 aa)). The CR-type zinc finger occupies 140-218 (GKDTQIRIPS…CNGAGRIKSN (79 aa)). 8 residues coordinate Zn(2+): Cys153, Cys156, Cys170, Cys173, Cys192, Cys195, Cys206, and Cys209. CXXCXGXG motif repeat units lie at residues 153–160 (CSTCDGTG), 170–177 (CPTCSGSG), 192–199 (CPSCHGTG), and 206–213 (CTACNGAG). Positions 357–380 (LKKGGERHSPNAKSWTDRVKDLFK) are disordered.

Belongs to the DnaJ family. Homodimer. Requires Zn(2+) as cofactor.

It is found in the cytoplasm. Functionally, participates actively in the response to hyperosmotic and heat shock by preventing the aggregation of stress-denatured proteins and by disaggregating proteins, also in an autonomous, DnaK-independent fashion. Unfolded proteins bind initially to DnaJ; upon interaction with the DnaJ-bound protein, DnaK hydrolyzes its bound ATP, resulting in the formation of a stable complex. GrpE releases ADP from DnaK; ATP binding to DnaK triggers the release of the substrate protein, thus completing the reaction cycle. Several rounds of ATP-dependent interactions between DnaJ, DnaK and GrpE are required for fully efficient folding. Also involved, together with DnaK and GrpE, in the DNA replication of plasmids through activation of initiation proteins. In Methylibium petroleiphilum (strain ATCC BAA-1232 / LMG 22953 / PM1), this protein is Chaperone protein DnaJ.